A 691-amino-acid polypeptide reads, in one-letter code: Transcription termination factor Rho (691 aa).

A disordered region spans residues 48–303; that stretch reads ISDHQRGGSV…PEVDETELTE (256 aa). Residues 50-64 are compositionally biased toward basic and acidic residues; sequence DHQRGGSVADRDAAE. Low complexity-rich tracts occupy residues 65 to 92 and 105 to 119; these read RAAQAPAAPAAETAPAAASSEDAAPAAE and DTSAPAAAQDGQPQA. Composition is skewed to basic and acidic residues over residues 120–158 and 188–273; these read EAREAQTEQAPRETASDQDRSGGSEARDEGEDRPQSERR and DADR…EGGR. One can recognise a Rho RNA-BD domain in the interval 307 to 390; sequence LQPVAGILDV…VKISSVNGQP (84 aa). ATP contacts are provided by residues 433 to 438, 445 to 450, and arginine 476; these read GKGQRG and KAGKTM.

The protein belongs to the Rho family. Homohexamer. The homohexamer assembles into an open ring structure.

Its function is as follows. Facilitates transcription termination by a mechanism that involves Rho binding to the nascent RNA, activation of Rho's RNA-dependent ATPase activity, and release of the mRNA from the DNA template. The polypeptide is Transcription termination factor Rho (Micrococcus luteus (Micrococcus lysodeikticus)).